We begin with the raw amino-acid sequence, 111 residues long: ATP-dependent Clp protease adapter protein ClpS (111 aa).

This sequence belongs to the ClpS family. In terms of assembly, binds to the N-terminal domain of the chaperone ClpA.

Involved in the modulation of the specificity of the ClpAP-mediated ATP-dependent protein degradation. The chain is ATP-dependent Clp protease adapter protein ClpS from Leptospira interrogans serogroup Icterohaemorrhagiae serovar copenhageni (strain Fiocruz L1-130).